The primary structure comprises 883 residues: Leucine--tRNA ligase (883 aa).

A 'HIGH' region motif is present at residues 43-53; it reads PYPSGRIHIGH. The short motif at 630–634 is the 'KMSKS' region element; that stretch reads KMSKS. Residue K633 coordinates ATP.

The protein belongs to the class-I aminoacyl-tRNA synthetase family.

The protein resides in the cytoplasm. The enzyme catalyses tRNA(Leu) + L-leucine + ATP = L-leucyl-tRNA(Leu) + AMP + diphosphate. The protein is Leucine--tRNA ligase of Nitrobacter winogradskyi (strain ATCC 25391 / DSM 10237 / CIP 104748 / NCIMB 11846 / Nb-255).